An 840-amino-acid chain; its full sequence is Phosphatidylinositol-3-phosphatase myotubularin-1 (840 aa).

The tract at residues 1-28 (MTPPRPPSGRVRSLRDYSSESEKMDGTG) is disordered. Residues 13-25 (SLRDYSSESEKMD) are compositionally biased toward basic and acidic residues. The region spanning 45-112 (GSFSNLSCLL…ATIEKFNKMV (68 aa)) is the GRAM domain. A Myotubularin phosphatase domain is found at 199-650 (GKSSIRASMD…LAPTLWPQFH (452 aa)). Residues 332–335 (NGAM), 357–358 (NI), 443–449 (CSDGWDR), and Arg489 contribute to the substrate site. Cys443 (phosphocysteine intermediate) is an active-site residue. Positions 506 to 535 (QSSSAGSFPSSPVRQSSGSAASQSSSSSHG) are disordered. Residues 507 to 535 (SSSAGSFPSSPVRQSSGSAASQSSSSSHG) are compositionally biased toward low complexity. Residues 666–734 (VQCRAMTVKY…AALTRAVQSL (69 aa)) adopt a coiled-coil conformation. The segment at 745-771 (VEDDPRSSLENNPRRRNRHGNNSDVSV) is disordered.

This sequence belongs to the protein-tyrosine phosphatase family. Non-receptor class myotubularin subfamily. Mostly expressed in siliques and leaves (including hydathodes), and, to a lower extent, in flowers and roots.

The protein resides in the cytoplasm. It localises to the endosome membrane. It catalyses the reaction a 1,2-diacyl-sn-glycero-3-phospho-(1D-myo-inositol-3-phosphate) + H2O = a 1,2-diacyl-sn-glycero-3-phospho-(1D-myo-inositol) + phosphate. It carries out the reaction a 1,2-diacyl-sn-glycero-3-phospho-(1D-myo-inositol-3,5-bisphosphate) + H2O = a 1,2-diacyl-sn-glycero-3-phospho-(1D-myo-inositol-5-phosphate) + phosphate. Functionally, phosphatase with phosphoinositide 3'-phosphatase activity that can use phosphatidylinositol-3-phosphate (PtdIns3P) and phosphatidylinositol-3,5-diphosphate (PtdIns3,5P(2)) as substrates and produces phosphatidylinositol-5-phosphate (PtdIns5P); participates in pathway(s) that transfer gene regulatory signals to the nucleus. Required for recovery after water deprivation, via the accumulation of PtdIns5P upon dehydration; high PtdIns5P levels mediate ATX1 cytoplasmic localization, thus down-regulating the expression of ATX1-dependent genes. Confers sensitivity to soil-water-deficit stress. This is Phosphatidylinositol-3-phosphatase myotubularin-1 (MTM1) from Arabidopsis thaliana (Mouse-ear cress).